Consider the following 316-residue polypeptide: Beta-ketoacyl-[acyl-carrier-protein] synthase III (316 aa).

Residues Cys112 and His243 contribute to the active site. The ACP-binding stretch occupies residues 244–248 (QANLR). The active site involves Asn273.

It belongs to the thiolase-like superfamily. FabH family. Homodimer.

It is found in the cytoplasm. The catalysed reaction is malonyl-[ACP] + acetyl-CoA + H(+) = 3-oxobutanoyl-[ACP] + CO2 + CoA. It participates in lipid metabolism; fatty acid biosynthesis. In terms of biological role, catalyzes the condensation reaction of fatty acid synthesis by the addition to an acyl acceptor of two carbons from malonyl-ACP. Catalyzes the first condensation reaction which initiates fatty acid synthesis and may therefore play a role in governing the total rate of fatty acid production. Possesses both acetoacetyl-ACP synthase and acetyl transacylase activities. Its substrate specificity determines the biosynthesis of branched-chain and/or straight-chain of fatty acids. This Actinobacillus succinogenes (strain ATCC 55618 / DSM 22257 / CCUG 43843 / 130Z) protein is Beta-ketoacyl-[acyl-carrier-protein] synthase III.